The chain runs to 311 residues: Ribosomal protein L11 methyltransferase (311 aa).

Residues Thr-160, Gly-181, Asp-203, and Asn-246 each coordinate S-adenosyl-L-methionine.

The protein belongs to the methyltransferase superfamily. PrmA family.

Its subcellular location is the cytoplasm. It carries out the reaction L-lysyl-[protein] + 3 S-adenosyl-L-methionine = N(6),N(6),N(6)-trimethyl-L-lysyl-[protein] + 3 S-adenosyl-L-homocysteine + 3 H(+). Methylates ribosomal protein L11. This is Ribosomal protein L11 methyltransferase from Macrococcus caseolyticus (strain JCSC5402) (Macrococcoides caseolyticum).